The following is a 405-amino-acid chain: Acetate kinase (405 aa).

Asparagine 7 serves as a coordination point for Mg(2+). ATP is bound at residue lysine 14. Arginine 99 contacts substrate. The active-site Proton donor/acceptor is the aspartate 156. Residue 215-219 (HLGNG) participates in ATP binding. Residue glutamate 391 participates in Mg(2+) binding.

It belongs to the acetokinase family. Homodimer. It depends on Mg(2+) as a cofactor. Requires Mn(2+) as cofactor.

Its subcellular location is the cytoplasm. It catalyses the reaction acetate + ATP = acetyl phosphate + ADP. It participates in metabolic intermediate biosynthesis; acetyl-CoA biosynthesis; acetyl-CoA from acetate: step 1/2. Its function is as follows. Catalyzes the formation of acetyl phosphate from acetate and ATP. Can also catalyze the reverse reaction. This chain is Acetate kinase, found in Nostoc sp. (strain PCC 7120 / SAG 25.82 / UTEX 2576).